Reading from the N-terminus, the 89-residue chain is Large ribosomal subunit protein bL27 (89 aa).

The segment at 1–23 (MAHKKAGGSSRNGRDSAGKRLGI) is disordered.

The protein belongs to the bacterial ribosomal protein bL27 family.

The polypeptide is Large ribosomal subunit protein bL27 (Rhodopseudomonas palustris (strain BisA53)).